The chain runs to 236 residues: ATP synthase subunit 4, mitochondrial (236 aa).

The transit peptide at 1–29 (MAFRALTTKAAARPLLALGPRSVAMGARY) directs the protein to the mitochondrion.

It belongs to the eukaryotic ATPase subunit B family. As to quaternary structure, F-type ATPases have 2 components, CF(1) - the catalytic core - and CF(0) - the membrane proton channel. In yeast, the dimeric form of ATP synthase consists of 17 polypeptides: alpha, beta, gamma, delta, epsilon, 4 (B), 5 (OSCP), 6 (A), 8, 9 (C), d, E (Tim11), f, g, h, i/j and k.

The protein resides in the mitochondrion. It is found in the mitochondrion inner membrane. Mitochondrial membrane ATP synthase (F(1)F(0) ATP synthase or Complex V) produces ATP from ADP in the presence of a proton gradient across the membrane which is generated by electron transport complexes of the respiratory chain. F-type ATPases consist of two structural domains, F(1) - containing the extramembraneous catalytic core, and F(0) - containing the membrane proton channel, linked together by a central stalk and a peripheral stalk. During catalysis, ATP synthesis in the catalytic domain of F(1) is coupled via a rotary mechanism of the central stalk subunits to proton translocation. Part of the complex F(0) domain and the peripheric stalk, which acts as a stator to hold the catalytic alpha(3)beta(3) subcomplex and subunit a/ATP6 static relative to the rotary elements. In Eremothecium gossypii (strain ATCC 10895 / CBS 109.51 / FGSC 9923 / NRRL Y-1056) (Yeast), this protein is ATP synthase subunit 4, mitochondrial (ATP4).